The following is a 310-amino-acid chain: Cytochrome f (310 aa).

The signal sequence occupies residues 1–23; the sequence is MRRLIPILLGSLVLSLSILVAPA. Residues Y28, C48, C51, and H52 each coordinate heme. Residues 277–297 form a helical membrane-spanning segment; it reads IYGLLAFFVAVSLAQILLVLK.

Belongs to the cytochrome f family. In terms of assembly, the 4 large subunits of the cytochrome b6-f complex are cytochrome b6, subunit IV (17 kDa polypeptide, PetD), cytochrome f and the Rieske protein, while the 4 small subunits are PetG, PetL, PetM and PetN. The complex functions as a dimer. It depends on heme as a cofactor.

Its subcellular location is the cellular thylakoid membrane. Its function is as follows. Component of the cytochrome b6-f complex, which mediates electron transfer between photosystem II (PSII) and photosystem I (PSI), cyclic electron flow around PSI, and state transitions. The chain is Cytochrome f from Prochlorococcus marinus (strain MIT 9303).